A 520-amino-acid polypeptide reads, in one-letter code: Vacuolar protein sorting-associated protein 9A (520 aa).

Residues 102–246 (VIADEKLFQK…ISNIDAKSIS (145 aa)) enclose the VPS9 domain. GTP-binding residues include asparagine 180 and aspartate 185. Disordered regions lie at residues 267–331 (DSQT…AESI), 396–433 (LAPSSSPLQASSGFNTSKESEDHRRSSSDVQMTKETDR), and 464–520 (LVEG…EASE). Polar residues predominate over residues 287-323 (LQKTQSLNPKRENTLFQSKSSDSLSGTNELLNINSET). A Phosphoserine modification is found at serine 330. Positions 396–407 (LAPSSSPLQASS) are enriched in low complexity. Composition is skewed to basic and acidic residues over residues 413–433 (KESEDHRRSSSDVQMTKETDR) and 464–497 (LVEGKDEERDSKVQGEVDAKDIELMKQIPKREGD).

Homodimer. The homodimer interacts with RABF2B. Interacts with RABF1 and RABF2A. In terms of tissue distribution, widely expressed.

Its function is as follows. Functions as a guanine nucleotide exchange factor (GEF) for Rab small GTPases. Activates specifically RABF1, RABF2A and RABF2B proteins. Required for early stages of embryogenesis, cytokinesis, embryogenesis, and organ development. Is essential for the establishment or maintenance of the polar localization of the auxin efflux carrier PIN1. In Arabidopsis thaliana (Mouse-ear cress), this protein is Vacuolar protein sorting-associated protein 9A.